Reading from the N-terminus, the 433-residue chain is Aspartate--tRNA(Asp/Asn) ligase (433 aa).

Glu-167 contacts L-aspartate. The segment at 189-192 (QLFK) is aspartate. Residue Arg-211 participates in L-aspartate binding. ATP is bound by residues 211–213 (RAE), 219–221 (RHL), and Glu-356. Mg(2+) contacts are provided by Glu-356 and Ser-359. Residues Ser-359 and Arg-363 each contribute to the L-aspartate site. Position 404-407 (404-407 (GGER)) interacts with ATP.

The protein belongs to the class-II aminoacyl-tRNA synthetase family. Type 2 subfamily. In terms of assembly, homodimer. It depends on Mg(2+) as a cofactor.

It is found in the cytoplasm. It catalyses the reaction tRNA(Asx) + L-aspartate + ATP = L-aspartyl-tRNA(Asx) + AMP + diphosphate. Aspartyl-tRNA synthetase with relaxed tRNA specificity since it is able to aspartylate not only its cognate tRNA(Asp) but also tRNA(Asn). Reaction proceeds in two steps: L-aspartate is first activated by ATP to form Asp-AMP and then transferred to the acceptor end of tRNA(Asp/Asn). The polypeptide is Aspartate--tRNA(Asp/Asn) ligase (Natronomonas pharaonis (strain ATCC 35678 / DSM 2160 / CIP 103997 / JCM 8858 / NBRC 14720 / NCIMB 2260 / Gabara) (Halobacterium pharaonis)).